A 91-amino-acid chain; its full sequence is Large ribosomal subunit protein uL23c (91 aa).

The protein belongs to the universal ribosomal protein uL23 family. In terms of assembly, part of the 50S ribosomal subunit.

The protein localises to the plastid. It is found in the chloroplast. Its function is as follows. Binds to 23S rRNA. This chain is Large ribosomal subunit protein uL23c (rpl23), found in Pinus thunbergii (Japanese black pine).